We begin with the raw amino-acid sequence, 132 residues long: Translation initiation factor 5A (132 aa).

The residue at position 36 (K36) is a Hypusine.

It belongs to the eIF-5A family.

The protein localises to the cytoplasm. Its function is as follows. Functions by promoting the formation of the first peptide bond. This Methanosphaera stadtmanae (strain ATCC 43021 / DSM 3091 / JCM 11832 / MCB-3) protein is Translation initiation factor 5A.